The primary structure comprises 397 residues: Pectate lyase 2 (397 aa).

A signal peptide spans 1–25; that stretch reads MGIKQCCYILYFTLALVALLQPVRS. N-linked (GlcNAc...) asparagine glycosylation occurs at asparagine 37. Cysteine 54 and cysteine 71 are oxidised to a cystine. Aspartate 194, aspartate 218, and aspartate 222 together coordinate Ca(2+). The active site involves arginine 274.

This sequence belongs to the polysaccharide lyase 1 family. Amb a subfamily. As to quaternary structure, monomer. It depends on Ca(2+) as a cofactor. Post-translationally, the N-terminus is blocked. In terms of tissue distribution, pollen and flowers.

It catalyses the reaction Eliminative cleavage of (1-&gt;4)-alpha-D-galacturonan to give oligosaccharides with 4-deoxy-alpha-D-galact-4-enuronosyl groups at their non-reducing ends.. It participates in glycan metabolism; pectin degradation; 2-dehydro-3-deoxy-D-gluconate from pectin: step 2/5. Has pectate lyase activity. This is Pectate lyase 2 from Ambrosia artemisiifolia (Common ragweed).